Here is a 243-residue protein sequence, read N- to C-terminus: uncharacterized protein (243 aa).

This is an uncharacterized protein from Ureaplasma parvum serovar 3 (strain ATCC 700970).